We begin with the raw amino-acid sequence, 456 residues long: Bifunctional protein GlmU (456 aa).

Positions 1–229 (MSNSAMSVVI…LSEVEGVNNR (229 aa)) are pyrophosphorylase. UDP-N-acetyl-alpha-D-glucosamine contacts are provided by residues 11–14 (LAAG), Lys25, Gln76, 81–82 (GT), 103–105 (YGD), Gly140, Glu154, Asn169, and Asn227. Asp105 lines the Mg(2+) pocket. Asn227 lines the Mg(2+) pocket. The interval 230–250 (LQLSALERVYQREQADRLLLA) is linker. The N-acetyltransferase stretch occupies residues 251-456 (GVMLLDPARF…SGWQRPVKKK (206 aa)). The UDP-N-acetyl-alpha-D-glucosamine site is built by Arg333 and Lys351. His363 acts as the Proton acceptor in catalysis. The UDP-N-acetyl-alpha-D-glucosamine site is built by Tyr366 and Asn377. Residues Ala380, 386 to 387 (NY), Ser405, Ala423, and Arg440 contribute to the acetyl-CoA site.

It in the N-terminal section; belongs to the N-acetylglucosamine-1-phosphate uridyltransferase family. In the C-terminal section; belongs to the transferase hexapeptide repeat family. Homotrimer. The cofactor is Mg(2+).

The protein localises to the cytoplasm. It catalyses the reaction alpha-D-glucosamine 1-phosphate + acetyl-CoA = N-acetyl-alpha-D-glucosamine 1-phosphate + CoA + H(+). It carries out the reaction N-acetyl-alpha-D-glucosamine 1-phosphate + UTP + H(+) = UDP-N-acetyl-alpha-D-glucosamine + diphosphate. It participates in nucleotide-sugar biosynthesis; UDP-N-acetyl-alpha-D-glucosamine biosynthesis; N-acetyl-alpha-D-glucosamine 1-phosphate from alpha-D-glucosamine 6-phosphate (route II): step 2/2. It functions in the pathway nucleotide-sugar biosynthesis; UDP-N-acetyl-alpha-D-glucosamine biosynthesis; UDP-N-acetyl-alpha-D-glucosamine from N-acetyl-alpha-D-glucosamine 1-phosphate: step 1/1. Its pathway is bacterial outer membrane biogenesis; LPS lipid A biosynthesis. Its function is as follows. Catalyzes the last two sequential reactions in the de novo biosynthetic pathway for UDP-N-acetylglucosamine (UDP-GlcNAc). The C-terminal domain catalyzes the transfer of acetyl group from acetyl coenzyme A to glucosamine-1-phosphate (GlcN-1-P) to produce N-acetylglucosamine-1-phosphate (GlcNAc-1-P), which is converted into UDP-GlcNAc by the transfer of uridine 5-monophosphate (from uridine 5-triphosphate), a reaction catalyzed by the N-terminal domain. The chain is Bifunctional protein GlmU from Pectobacterium carotovorum subsp. carotovorum (strain PC1).